The primary structure comprises 336 residues: Fructose-1,6-bisphosphatase class 1 (336 aa).

Mg(2+) contacts are provided by E90, D112, L114, and D115. Substrate contacts are provided by residues 115-118 (DGSS), N211, and K277. E283 serves as a coordination point for Mg(2+).

The protein belongs to the FBPase class 1 family. In terms of assembly, homotetramer. Requires Mg(2+) as cofactor.

It is found in the cytoplasm. The enzyme catalyses beta-D-fructose 1,6-bisphosphate + H2O = beta-D-fructose 6-phosphate + phosphate. It functions in the pathway carbohydrate biosynthesis; gluconeogenesis. The sequence is that of Fructose-1,6-bisphosphatase class 1 from Pseudomonas fluorescens (strain ATCC BAA-477 / NRRL B-23932 / Pf-5).